The primary structure comprises 203 residues: MRTPITTHSLLLLLLLQQLLQPVQLQEVDTDFDSPDDEMEELEEYLEEFQSTGPTRPPTKENVERRVIIEPGMPLYDRDYCNEEIKRKNVYHKYRCVTEHYFLLMQYDELQKICYNRFVPCKNGVRKCNRSKGLVEGVYCNLTEAFEIPRCKYKSFYRRGYVLITCAWQNEIHKLIPHTINDLVEPPKHRSFLNEDGVFVIPP.

A signal peptide spans 1–25; the sequence is MRTPITTHSLLLLLLLQQLLQPVQL. Intrachain disulfides connect cysteine 96–cysteine 151, cysteine 114–cysteine 166, and cysteine 121–cysteine 128. Residues asparagine 129 and asparagine 141 are each glycosylated (N-linked (GlcNAc...) asparagine).

This sequence belongs to the pancreatic ribonuclease family.

It localises to the secreted. Functionally, does not exhibit any ribonuclease activity. The protein is Inactive ribonuclease-like protein 9 (RNASE9) of Macaca assamensis (Assam macaque).